The sequence spans 508 residues: Putative inorganic phosphate transporter 1-13 (508 aa).

The Cytoplasmic segment spans residues 1–22; it reads MAGNQQLRVLHALDIARTQLYH. Residues 23 to 43 traverse the membrane as a helical segment; that stretch reads FIAIVIAGMGFFTDAYDLFSI. Topologically, residues 44 to 64 are extracellular; sequence SLVADLLGHVYYHGELPRNIH. The helical transmembrane segment at 65–85 threads the bilayer; that stretch reads AAVTGIALCGTVPGQLVFGWL. The Cytoplasmic segment spans residues 86–93; sequence GDKMGRKR. The helical transmembrane segment at 94–114 threads the bilayer; the sequence is VYGITLLLMVVSSLASGLSFS. The Extracellular segment spans residues 115–117; the sequence is KHE. Residues 118-138 form a helical membrane-spanning segment; that stretch reads GMNIIAVLCFFRFWLGVSIGG. Over 139-159 the chain is Cytoplasmic; sequence DYPLSATIMSEYANKRTRGAF. The chain crosses the membrane as a helical span at residues 160–180; it reads IAAVFAMQGFGNLAAGIIGMI. Residues 181 to 192 lie on the Extracellular side of the membrane; it reads VSAAFKHSSASK. The chain crosses the membrane as a helical span at residues 193–213; sequence IDYAWRIILMFGAIPAALTYH. Topologically, residues 214–277 are cytoplasmic; that stretch reads WRMKMPETAR…FEFLHRHGLH (64 aa). The helical transmembrane segment at 278-298 threads the bilayer; it reads LLGTTVCWFVLDVTFYSLNIF. Over 299-328 the chain is Extracellular; the sequence is MKNIFTEVGLLPRLDSEYHHTLQRMITMTA. The chain crosses the membrane as a helical span at residues 329–349; it reads VHTFISLCGALPGYFFTVAFV. At 350 to 354 the chain is on the cytoplasmic side; that stretch reads DRIGR. Residues 355-375 form a helical membrane-spanning segment; sequence VKIQLIGFTMMTVFMLCLAIP. Over 376-389 the chain is Extracellular; the sequence is YDQWLRHKNKYGFA. A helical transmembrane segment spans residues 390–410; that stretch reads VMYGLTFFFANFGPNTTTFII. Residues 411–424 lie on the Cytoplasmic side of the membrane; sequence PAEIFPARLRSTCH. The helical transmembrane segment at 425-445 threads the bilayer; it reads GISGAVGKIGAIVGVFGFLYT. Over 446–450 the chain is Extracellular; that stretch reads EYHIR. Residues 451 to 471 traverse the membrane as a helical segment; it reads IFLFVLIGCNLVGFIFTLLLP. Topologically, residues 472–508 are cytoplasmic; it reads ESKGKSLEDLTGEIEEFQEEDEGSEVALSRPIHTVPL.

The protein belongs to the major facilitator superfamily. Phosphate:H(+) symporter (TC 2.A.1.9) family.

Its subcellular location is the membrane. In terms of biological role, high-affinity transporter for external inorganic phosphate. This chain is Putative inorganic phosphate transporter 1-13 (PHT1-13), found in Oryza sativa subsp. japonica (Rice).